The sequence spans 210 residues: Holliday junction branch migration complex subunit RuvA (210 aa).

A domain I region spans residues Met-1 to Leu-64. Residues His-65–Thr-143 form a domain II region. The flexible linker stretch occupies residues Glu-144–Asn-154. A domain III region spans residues Ser-155–Phe-210.

Belongs to the RuvA family. As to quaternary structure, homotetramer. Forms an RuvA(8)-RuvB(12)-Holliday junction (HJ) complex. HJ DNA is sandwiched between 2 RuvA tetramers; dsDNA enters through RuvA and exits via RuvB. An RuvB hexamer assembles on each DNA strand where it exits the tetramer. Each RuvB hexamer is contacted by two RuvA subunits (via domain III) on 2 adjacent RuvB subunits; this complex drives branch migration. In the full resolvosome a probable DNA-RuvA(4)-RuvB(12)-RuvC(2) complex forms which resolves the HJ.

The protein resides in the cytoplasm. Its function is as follows. The RuvA-RuvB-RuvC complex processes Holliday junction (HJ) DNA during genetic recombination and DNA repair, while the RuvA-RuvB complex plays an important role in the rescue of blocked DNA replication forks via replication fork reversal (RFR). RuvA specifically binds to HJ cruciform DNA, conferring on it an open structure. The RuvB hexamer acts as an ATP-dependent pump, pulling dsDNA into and through the RuvAB complex. HJ branch migration allows RuvC to scan DNA until it finds its consensus sequence, where it cleaves and resolves the cruciform DNA. In Psychrobacter sp. (strain PRwf-1), this protein is Holliday junction branch migration complex subunit RuvA.